The primary structure comprises 461 residues: Bifunctional protein GlmU (461 aa).

The segment at 1–232 (MNLQIIILAA…SFEVQGINNR (232 aa)) is pyrophosphorylase. UDP-N-acetyl-alpha-D-glucosamine contacts are provided by residues 8-11 (LAAG), Lys22, Gln73, and 78-79 (GT). A Mg(2+)-binding site is contributed by Asp102. 3 residues coordinate UDP-N-acetyl-alpha-D-glucosamine: Gly142, Glu157, and Asn230. A Mg(2+)-binding site is contributed by Asn230. Residues 233 to 253 (QQLQQLERIWQQRAANQLMEK) form a linker region. The segment at 254–461 (GATLADANRF…WKRPVKRERD (208 aa)) is N-acetyltransferase. UDP-N-acetyl-alpha-D-glucosamine contacts are provided by Arg336 and Lys354. His366 serves as the catalytic Proton acceptor. UDP-N-acetyl-alpha-D-glucosamine is bound by residues Tyr369 and Asn380. Acetyl-CoA contacts are provided by residues Ala383, 389 to 390 (NY), Ser408, and Ala426.

This sequence in the N-terminal section; belongs to the N-acetylglucosamine-1-phosphate uridyltransferase family. It in the C-terminal section; belongs to the transferase hexapeptide repeat family. In terms of assembly, homotrimer. Requires Mg(2+) as cofactor.

The protein localises to the cytoplasm. The catalysed reaction is alpha-D-glucosamine 1-phosphate + acetyl-CoA = N-acetyl-alpha-D-glucosamine 1-phosphate + CoA + H(+). It carries out the reaction N-acetyl-alpha-D-glucosamine 1-phosphate + UTP + H(+) = UDP-N-acetyl-alpha-D-glucosamine + diphosphate. It functions in the pathway nucleotide-sugar biosynthesis; UDP-N-acetyl-alpha-D-glucosamine biosynthesis; N-acetyl-alpha-D-glucosamine 1-phosphate from alpha-D-glucosamine 6-phosphate (route II): step 2/2. Its pathway is nucleotide-sugar biosynthesis; UDP-N-acetyl-alpha-D-glucosamine biosynthesis; UDP-N-acetyl-alpha-D-glucosamine from N-acetyl-alpha-D-glucosamine 1-phosphate: step 1/1. It participates in bacterial outer membrane biogenesis; LPS lipid A biosynthesis. In terms of biological role, catalyzes the last two sequential reactions in the de novo biosynthetic pathway for UDP-N-acetylglucosamine (UDP-GlcNAc). The C-terminal domain catalyzes the transfer of acetyl group from acetyl coenzyme A to glucosamine-1-phosphate (GlcN-1-P) to produce N-acetylglucosamine-1-phosphate (GlcNAc-1-P), which is converted into UDP-GlcNAc by the transfer of uridine 5-monophosphate (from uridine 5-triphosphate), a reaction catalyzed by the N-terminal domain. The sequence is that of Bifunctional protein GlmU from Legionella pneumophila subsp. pneumophila (strain Philadelphia 1 / ATCC 33152 / DSM 7513).